A 147-amino-acid polypeptide reads, in one-letter code: UPF0178 protein AFE_3267 (147 aa).

The protein belongs to the UPF0178 family.

This chain is UPF0178 protein AFE_3267, found in Acidithiobacillus ferrooxidans (strain ATCC 23270 / DSM 14882 / CIP 104768 / NCIMB 8455) (Ferrobacillus ferrooxidans (strain ATCC 23270)).